Consider the following 281-residue polypeptide: Probable endonuclease 4 (281 aa).

Residues histidine 69, histidine 109, glutamate 145, aspartate 179, histidine 182, histidine 216, aspartate 229, histidine 231, and glutamate 261 each coordinate Zn(2+).

The protein belongs to the AP endonuclease 2 family. The cofactor is Zn(2+).

It catalyses the reaction Endonucleolytic cleavage to 5'-phosphooligonucleotide end-products.. Endonuclease IV plays a role in DNA repair. It cleaves phosphodiester bonds at apurinic or apyrimidinic (AP) sites, generating a 3'-hydroxyl group and a 5'-terminal sugar phosphate. The sequence is that of Probable endonuclease 4 from Aeromonas salmonicida (strain A449).